Consider the following 267-residue polypeptide: Acyl-[acyl-carrier-protein]--UDP-N-acetylglucosamine O-acyltransferase (267 aa).

It belongs to the transferase hexapeptide repeat family. LpxA subfamily. In terms of assembly, homotrimer.

Its subcellular location is the cytoplasm. It carries out the reaction a (3R)-hydroxyacyl-[ACP] + UDP-N-acetyl-alpha-D-glucosamine = a UDP-3-O-[(3R)-3-hydroxyacyl]-N-acetyl-alpha-D-glucosamine + holo-[ACP]. The protein operates within glycolipid biosynthesis; lipid IV(A) biosynthesis; lipid IV(A) from (3R)-3-hydroxytetradecanoyl-[acyl-carrier-protein] and UDP-N-acetyl-alpha-D-glucosamine: step 1/6. In terms of biological role, involved in the biosynthesis of lipid A, a phosphorylated glycolipid that anchors the lipopolysaccharide to the outer membrane of the cell. The chain is Acyl-[acyl-carrier-protein]--UDP-N-acetylglucosamine O-acyltransferase from Proteus mirabilis (strain HI4320).